A 286-amino-acid polypeptide reads, in one-letter code: Bifunctional protein FolD (286 aa).

Residues 166–168 and isoleucine 232 contribute to the NADP(+) site; that span reads GAS.

It belongs to the tetrahydrofolate dehydrogenase/cyclohydrolase family. As to quaternary structure, homodimer.

The catalysed reaction is (6R)-5,10-methylene-5,6,7,8-tetrahydrofolate + NADP(+) = (6R)-5,10-methenyltetrahydrofolate + NADPH. It carries out the reaction (6R)-5,10-methenyltetrahydrofolate + H2O = (6R)-10-formyltetrahydrofolate + H(+). It functions in the pathway one-carbon metabolism; tetrahydrofolate interconversion. Its function is as follows. Catalyzes the oxidation of 5,10-methylenetetrahydrofolate to 5,10-methenyltetrahydrofolate and then the hydrolysis of 5,10-methenyltetrahydrofolate to 10-formyltetrahydrofolate. The chain is Bifunctional protein FolD from Vibrio campbellii (strain ATCC BAA-1116).